The primary structure comprises 157 residues: ATP synthase subunit b', chloroplastic (157 aa).

Residues 26 to 43 traverse the membrane as a helical segment; sequence LMASQFLLIMLILDITFY.

Belongs to the ATPase B chain family. F-type ATPases have 2 components, F(1) - the catalytic core - and F(0) - the membrane proton channel. F(1) has five subunits: alpha(3), beta(3), gamma(1), delta(1), epsilon(1). F(0) has four main subunits: a(1), b(1), b'(1) and c(10-14). The alpha and beta chains form an alternating ring which encloses part of the gamma chain. F(1) is attached to F(0) by a central stalk formed by the gamma and epsilon chains, while a peripheral stalk is formed by the delta, b and b' chains.

It is found in the plastid. The protein resides in the chloroplast thylakoid membrane. In terms of biological role, f(1)F(0) ATP synthase produces ATP from ADP in the presence of a proton or sodium gradient. F-type ATPases consist of two structural domains, F(1) containing the extramembraneous catalytic core and F(0) containing the membrane proton channel, linked together by a central stalk and a peripheral stalk. During catalysis, ATP synthesis in the catalytic domain of F(1) is coupled via a rotary mechanism of the central stalk subunits to proton translocation. Functionally, component of the F(0) channel, it forms part of the peripheral stalk, linking F(1) to F(0). The b'-subunit is a diverged and duplicated form of b found in plants and photosynthetic bacteria. The chain is ATP synthase subunit b', chloroplastic from Cyanidium caldarium (Red alga).